The following is a 364-amino-acid chain: MAKYTVAVAGATGYAGGEALRILAAHPDFDITCVAGHSSVGESMAKHMPHIPQLANLVVEDTAPEVLNGHDVIILALPHGASGKLASQLDPNAVVVDLGADHRLEEQAAWDEFYGGDFYEHWTYGMPELITGKAADGSYTRQRAALPGTKRIAGPGCNVTATTLALQPGIAEGLVESQDIVADLVVGYSGAGKNLKRTNLLAAEALQSALPYSVGGKHRHIPEILQNFAHAAGKSAAEASEFTLGFTPILAPMSRGILATVSARMTDKAKTLSDEEIRAVWSKAYEGQDFMVLLPEGTLPATGNIIGSNAAHLQVVTDRKAGRIYAFAAIDNLNRGTAGQAVQSLNIALGLPEDAGLTKIGVAP.

Cysteine 157 is a catalytic residue.

The protein belongs to the NAGSA dehydrogenase family. Type 1 subfamily.

The protein resides in the cytoplasm. The enzyme catalyses N-acetyl-L-glutamate 5-semialdehyde + phosphate + NADP(+) = N-acetyl-L-glutamyl 5-phosphate + NADPH + H(+). Its pathway is amino-acid biosynthesis; L-arginine biosynthesis; N(2)-acetyl-L-ornithine from L-glutamate: step 3/4. In terms of biological role, catalyzes the NADPH-dependent reduction of N-acetyl-5-glutamyl phosphate to yield N-acetyl-L-glutamate 5-semialdehyde. In Bifidobacterium longum (strain NCC 2705), this protein is N-acetyl-gamma-glutamyl-phosphate reductase.